The chain runs to 485 residues: Solute carrier family 35 member F4 (485 aa).

Composition is skewed to polar residues over residues 32-42 (SQKSTTRSSVT) and 50-64 (CPSS…LSPL). 2 disordered regions span residues 32-64 (SQKS…LSPL) and 78-111 (QSRG…SSQE). Residues 88–98 (RRVERQSRSGD) are compositionally biased toward basic and acidic residues. The segment covering 99–111 (DGTQTRPESSSQE) has biased composition (polar residues). 10 consecutive transmembrane segments (helical) span residues 129-149 (IWGL…TQIV), 156-176 (FYCP…FFPV), 217-234 (APFS…LLAL), 241-261 (DVSA…WIVL), 265-285 (FMGV…MMAY), 294-314 (IIGV…KVLF), 329-349 (FVST…IILY), 359-381 (FAAL…NILV), 383-405 (VGVV…PGNA), and 414-434 (VIFN…FLLM). One can recognise an EamA domain in the interval 225–285 (LTNYLYLLAL…AITGIVMMAY (61 aa)).

This sequence belongs to the SLC35F solute transporter family.

Its subcellular location is the membrane. Its function is as follows. Putative solute transporter. The chain is Solute carrier family 35 member F4 (Slc35f4) from Mus musculus (Mouse).